The sequence spans 256 residues: Thiazole synthase (256 aa).

The active-site Schiff-base intermediate with DXP is the Lys-95. Residues Gly-156, 182–183, and 204–205 contribute to the 1-deoxy-D-xylulose 5-phosphate site; these read AG and NT.

It belongs to the ThiG family. As to quaternary structure, homotetramer. Forms heterodimers with either ThiH or ThiS.

It localises to the cytoplasm. It carries out the reaction [ThiS sulfur-carrier protein]-C-terminal-Gly-aminoethanethioate + 2-iminoacetate + 1-deoxy-D-xylulose 5-phosphate = [ThiS sulfur-carrier protein]-C-terminal Gly-Gly + 2-[(2R,5Z)-2-carboxy-4-methylthiazol-5(2H)-ylidene]ethyl phosphate + 2 H2O + H(+). The protein operates within cofactor biosynthesis; thiamine diphosphate biosynthesis. Functionally, catalyzes the rearrangement of 1-deoxy-D-xylulose 5-phosphate (DXP) to produce the thiazole phosphate moiety of thiamine. Sulfur is provided by the thiocarboxylate moiety of the carrier protein ThiS. In vitro, sulfur can be provided by H(2)S. This Escherichia coli O6:H1 (strain CFT073 / ATCC 700928 / UPEC) protein is Thiazole synthase.